A 482-amino-acid polypeptide reads, in one-letter code: High affinity 3',5'-cyclic-AMP phosphodiesterase 7A (482 aa).

Serine 84 carries the post-translational modification Phosphoserine. Residues 136 to 458 enclose the PDEase domain; that stretch reads LDDDYNGQAK…ASWKGLQREQ (323 aa). Histidine 212 functions as the Proton donor in the catalytic mechanism. A divalent metal cation-binding residues include histidine 216, histidine 252, aspartate 253, and aspartate 362.

Belongs to the cyclic nucleotide phosphodiesterase family. PDE7 subfamily. Interacts with CBFA2T3. It depends on a divalent metal cation as a cofactor. As to expression, found at high levels in skeletal muscle and at low levels in a variety of tissues including brain and heart. It is expressed as well in two T-cell lines. Found abundantly in skeletal muscle and at low levels in heart.

It localises to the cytoplasm. The protein resides in the cytosol. The enzyme catalyses 3',5'-cyclic AMP + H2O = AMP + H(+). It functions in the pathway purine metabolism; 3',5'-cyclic AMP degradation; AMP from 3',5'-cyclic AMP: step 1/1. Its activity is regulated as follows. Insensitive to all selective PDE inhibitors. Functionally, hydrolyzes the second messenger cAMP, which is a key regulator of many important physiological processes. May have a role in muscle signal transduction. In Homo sapiens (Human), this protein is High affinity 3',5'-cyclic-AMP phosphodiesterase 7A.